The primary structure comprises 81 residues: Photosystem I iron-sulfur center (81 aa).

4Fe-4S ferredoxin-type domains follow at residues 2–31 and 39–68; these read SHAV…MVPW and IASS…IRVY. 8 residues coordinate [4Fe-4S] cluster: C11, C14, C17, C21, C48, C51, C54, and C58.

The cyanobacterial PSI reaction center is composed of one copy each of PsaA,B,C,D,E,F,I,J,K,L,M and X, and forms trimeric complexes. [4Fe-4S] cluster serves as cofactor.

Its subcellular location is the cellular thylakoid membrane. The catalysed reaction is reduced [plastocyanin] + hnu + oxidized [2Fe-2S]-[ferredoxin] = oxidized [plastocyanin] + reduced [2Fe-2S]-[ferredoxin]. Apoprotein for the two 4Fe-4S centers FA and FB of photosystem I (PSI); essential for photochemical activity. FB is the terminal electron acceptor of PSI, donating electrons to ferredoxin. The C-terminus interacts with PsaA/B/D and helps assemble the protein into the PSI complex. Required for binding of PsaD and PsaE to PSI. PSI is a plastocyanin/cytochrome c6-ferredoxin oxidoreductase, converting photonic excitation into a charge separation, which transfers an electron from the donor P700 chlorophyll pair to the spectroscopically characterized acceptors A0, A1, FX, FA and FB in turn. This chain is Photosystem I iron-sulfur center, found in Prochlorococcus marinus (strain NATL2A).